Consider the following 90-residue polypeptide: Putative sodium channel toxin Ts35 (90 aa).

The first 22 residues, 1-22 (QDEVGLGSCSVIFVVGNEEGEA), serve as a signal peptide directing secretion. In terms of domain architecture, LCN-type CS-alpha/beta spans 23 to 87 (KDGYAVGGDR…WGNPTLGPCL (65 aa)). 4 disulfide bridges follow: C33/C86, C37/C61, C46/C66, and C50/C68.

The protein belongs to the long (4 C-C) scorpion toxin superfamily. Sodium channel inhibitor family. As to expression, expressed by the venom gland.

Its subcellular location is the secreted. Functionally, putative sodium channel toxin. In Tityus serrulatus (Brazilian scorpion), this protein is Putative sodium channel toxin Ts35.